The chain runs to 316 residues: L-lactate dehydrogenase 3 (316 aa).

Positions 16, 37, 42, and 68 each coordinate NAD(+). Arg91 contributes to the substrate binding site. Residues Ser104, 121–123 (ASN), and Thr146 contribute to the NAD(+) site. 123–126 (NPVD) lines the substrate pocket. Residue 151–154 (DSSR) participates in substrate binding. Beta-D-fructose 1,6-bisphosphate-binding residues include Arg156 and His171. The active-site Proton acceptor is the His178. Residue Thr233 participates in substrate binding.

The protein belongs to the LDH/MDH superfamily. LDH family. In terms of assembly, homotetramer.

It localises to the cytoplasm. It catalyses the reaction (S)-lactate + NAD(+) = pyruvate + NADH + H(+). The protein operates within fermentation; pyruvate fermentation to lactate; (S)-lactate from pyruvate: step 1/1. Allosterically activated by fructose 1,6-bisphosphate (FBP). Functionally, catalyzes the conversion of lactate to pyruvate. This is L-lactate dehydrogenase 3 from Bacillus thuringiensis subsp. konkukian (strain 97-27).